The following is a 656-amino-acid chain: Methylenetetrahydrofolate reductase (NADPH) (656 aa).

Positions 1 to 12 (MVNEARGNSSLN) are enriched in polar residues. The disordered stretch occupies residues 1 to 44 (MVNEARGNSSLNPCLEGSASSGSESSKDSSRCSTPGLDPERHER). 10 positions are modified to phosphoserine: S9, S10, S18, S20, S21, S23, S25, S26, S29, and S30. T34 carries the post-translational modification Phosphothreonine. E63 (proton donor/acceptor) is an active-site residue. Position 63–68 (63–68 (EFFPPR)) interacts with NAD(+). Y90 carries the phosphotyrosine modification. Residue T94 is modified to Phosphothreonine. NAD(+) is bound at residue 94–95 (TW). 94–95 (TW) is a binding site for FAD. Residue S103 is modified to Phosphoserine. FAD-binding positions include H127, 157-159 (RGD), 174-175 (YA), Y197, 201-204 (HPEA), D210, and K217. D159 serves as a coordination point for substrate. Substrate-binding residues include Q228, Y321, and R325. S394 bears the Phosphoserine mark. T451 bears the Phosphothreonine mark. S-adenosyl-L-methionine contacts are provided by residues N456, 461–464 (AAET), 481–485 (TINSQ), T560, and T573.

This sequence belongs to the methylenetetrahydrofolate reductase family. As to quaternary structure, homodimer. The cofactor is FAD. Post-translationally, phosphorylation of an N-terminal serine-rich phosphorylation region increases sensitivity to S-adenosylmethionine and inhibition.

The enzyme catalyses (6S)-5-methyl-5,6,7,8-tetrahydrofolate + NADP(+) = (6R)-5,10-methylene-5,6,7,8-tetrahydrofolate + NADPH + H(+). Its pathway is one-carbon metabolism; tetrahydrofolate interconversion. Its activity is regulated as follows. Allosterically regulated by S-adenosylmethionine (SAM). In terms of biological role, catalyzes the conversion of 5,10-methylenetetrahydrofolate to 5-methyltetrahydrofolate, a cosubstrate for homocysteine remethylation to methionine. Represents a key regulatory connection between the folate and methionine cycles. In Homo sapiens (Human), this protein is Methylenetetrahydrofolate reductase (NADPH).